We begin with the raw amino-acid sequence, 358 residues long: MPNPGSTSSPGSIPEEIRNLLADVETFVADTLKGENLSKKAKEKRDSLIKKIKDVKSVYPQEFQDKGDAEEGDEYDDPFAGPPDTISLASERYDKDDDGPSDGNQFPPIAAQDLSFVIKAGYLEKRRKDHSFLGFEWQKRWCALSKTVFYYYGSDKDKQQKGEFAIEGYDVRMNNTLRKDAKKDCCFEICAPDKRIYQFTAASPKDAEEWVQQLKFILQDMGSDVIPEDEDEKGDLYDDVDHPVPVSSPQRSQPIDDEIYEELPEEEEDTASVKMDEQGKGSRDSVQHPSGDKSTDYANFYQGLWDCTGSLSDELSFKRGDVIYILSKEYNRYGWWVGEMQGAIGLVPKAYLMEMYDI.

Phosphoserine occurs at positions 6 and 9. Residues 60–108 (PQEFQDKGDAEEGDEYDDPFAGPPDTISLASERYDKDDDGPSDGNQFPP) are disordered. Position 75 is a phosphotyrosine (Tyr-75). Phosphoserine is present on residues Ser-87 and Ser-90. Positions 116–219 (FVIKAGYLEK…WVQQLKFILQ (104 aa)) constitute a PH domain. A phosphotyrosine mark is found at Tyr-151 and Tyr-197. Residue Ser-223 is modified to Phosphoserine. The interval 227–293 (PEDEDEKGDL…DSVQHPSGDK (67 aa)) is disordered. Positions 243–253 (PVPVSSPQRSQ) are enriched in low complexity. The span at 255-270 (IDDEIYEELPEEEEDT) shows a compositional bias: acidic residues. Residue Tyr-260 is modified to Phosphotyrosine. Phosphoserine occurs at positions 272, 282, and 285. The span at 274–293 (KMDEQGKGSRDSVQHPSGDK) shows a compositional bias: basic and acidic residues. In terms of domain architecture, SH3 spans 296–357 (DYANFYQGLW…PKAYLMEMYD (62 aa)).

The protein belongs to the SKAP family. Interacts with FYB1, which is required for SKAP2 protein stability. Interacts with PTPNS1. Part of a complex consisting of SKAP2, FYB1 and PTPNS1. Part of a complex consisting of SKAP2, FYB1 and LILRB3. Interacts with LAT, GRB2, PTK2B, and PRAM1. May interact with actin. May interact with FYN, HCK and LYN. Interacts with FASLG.

It localises to the cytoplasm. Functionally, may be involved in B-cell and macrophage adhesion processes. In B-cells, may act by coupling the B-cell receptor (BCR) to integrin activation. May play a role in src signaling pathway. This Rattus norvegicus (Rat) protein is Src kinase-associated phosphoprotein 2 (Skap2).